A 695-amino-acid chain; its full sequence is Polyribonucleotide nucleotidyltransferase (695 aa).

2 residues coordinate Mg(2+): aspartate 486 and aspartate 492. Residues 553-612 (PRIETMQINTSKIATVIGPGGKQIRQIIERSGAQVDINDDGVINIAASTQESINKAKELI) form the KH domain. One can recognise an S1 motif domain in the interval 622 to 690 (GKVYNGRVTS…EKGQLKLSHK (69 aa)).

This sequence belongs to the polyribonucleotide nucleotidyltransferase family. Requires Mg(2+) as cofactor.

It localises to the cytoplasm. It catalyses the reaction RNA(n+1) + phosphate = RNA(n) + a ribonucleoside 5'-diphosphate. In terms of biological role, involved in mRNA degradation. Catalyzes the phosphorolysis of single-stranded polyribonucleotides processively in the 3'- to 5'-direction. The chain is Polyribonucleotide nucleotidyltransferase from Chlamydia trachomatis serovar L2 (strain ATCC VR-902B / DSM 19102 / 434/Bu).